A 65-amino-acid polypeptide reads, in one-letter code: DNA gyrase inhibitor YacG (65 aa).

4 residues coordinate Zn(2+): Cys-9, Cys-12, Cys-28, and Cys-32. The tract at residues 45-65 (KRIPSSGDLSESDDWSEEPKQ) is disordered. Residues 54–65 (SESDDWSEEPKQ) show a composition bias toward acidic residues.

The protein belongs to the DNA gyrase inhibitor YacG family. As to quaternary structure, interacts with GyrB. Zn(2+) is required as a cofactor.

Functionally, inhibits all the catalytic activities of DNA gyrase by preventing its interaction with DNA. Acts by binding directly to the C-terminal domain of GyrB, which probably disrupts DNA binding by the gyrase. The polypeptide is DNA gyrase inhibitor YacG (Shigella boydii serotype 18 (strain CDC 3083-94 / BS512)).